A 379-amino-acid chain; its full sequence is Anomalous homeobox protein (379 aa).

The homeobox DNA-binding region spans 135–196 (PEGLKSRNFP…NYRRRQRALP (62 aa)). Residues 195-283 (LPQHMKPAQQ…SKPLDVSGHP (89 aa)) are disordered. Over residues 237–246 (QWSEEREEKG) the composition is skewed to basic and acidic residues.

It localises to the nucleus. This chain is Anomalous homeobox protein (ANHX), found in Homo sapiens (Human).